The following is a 120-amino-acid chain: NAD(P)H-quinone oxidoreductase subunit 3, chloroplastic (120 aa).

3 consecutive transmembrane segments (helical) span residues 9–29 (IFWAFLIISSVIPILAFLFSG), 64–84 (MFALVFVVFDVETVFLYPWAM), and 88–108 (ILGVSVFIEALIFVLILIVGL).

Belongs to the complex I subunit 3 family. In terms of assembly, NDH is composed of at least 16 different subunits, 5 of which are encoded in the nucleus.

It is found in the plastid. Its subcellular location is the chloroplast thylakoid membrane. The enzyme catalyses a plastoquinone + NADH + (n+1) H(+)(in) = a plastoquinol + NAD(+) + n H(+)(out). The catalysed reaction is a plastoquinone + NADPH + (n+1) H(+)(in) = a plastoquinol + NADP(+) + n H(+)(out). Functionally, NDH shuttles electrons from NAD(P)H:plastoquinone, via FMN and iron-sulfur (Fe-S) centers, to quinones in the photosynthetic chain and possibly in a chloroplast respiratory chain. The immediate electron acceptor for the enzyme in this species is believed to be plastoquinone. Couples the redox reaction to proton translocation, and thus conserves the redox energy in a proton gradient. This chain is NAD(P)H-quinone oxidoreductase subunit 3, chloroplastic, found in Spinacia oleracea (Spinach).